Here is a 338-residue protein sequence, read N- to C-terminus: Mugineic-acid 3-dioxygenase (338 aa).

The Fe2OG dioxygenase domain occupies 180–283; that stretch reads DISGGRVVVD…RLSVASFIVP (104 aa). Residues His-208, Asp-210, and His-264 each contribute to the Fe cation site. Arg-274 lines the 2-oxoglutarate pocket.

Belongs to the iron/ascorbate-dependent oxidoreductase family. Fe(2+) is required as a cofactor. Requires L-ascorbate as cofactor. As to expression, expressed in roots, but not in leaves.

It catalyses the reaction mugineate + 2-oxoglutarate + O2 = 3-epihydroxymugineate + succinate + CO2 + H(+). The catalysed reaction is 2'-deoxymugineate + 2-oxoglutarate + O2 = 3-epihydroxy-2'-deoxymugineate + succinate + CO2 + H(+). Involved in the biosynthesis of mugineic acid family of phytosiderophores. Hydroxylates the C-3 positions of mugineic acid (MA) and 2'-deoxymugineic acid (DMA). May be involved in boron tolerance. This chain is Mugineic-acid 3-dioxygenase (IDS2), found in Hordeum vulgare (Barley).